Here is a 180-residue protein sequence, read N- to C-terminus: UPF0227 protein PC1_2487 (180 aa).

The protein belongs to the UPF0227 family.

This chain is UPF0227 protein PC1_2487, found in Pectobacterium carotovorum subsp. carotovorum (strain PC1).